The sequence spans 366 residues: Anthranilate phosphoribosyltransferase (366 aa).

5-phospho-alpha-D-ribose 1-diphosphate-binding positions include Gly103, Gly106–Asp107, Thr111, Asn113–Thr116, Lys131–Ser139, and Gly143. Anthranilate is bound at residue Gly103. A Mg(2+)-binding site is contributed by Ser115. Asn134 provides a ligand contact to anthranilate. Residue Arg189 coordinates anthranilate. The Mg(2+) site is built by Asp247 and Glu248.

Belongs to the anthranilate phosphoribosyltransferase family. As to quaternary structure, homodimer. The cofactor is Mg(2+).

The enzyme catalyses N-(5-phospho-beta-D-ribosyl)anthranilate + diphosphate = 5-phospho-alpha-D-ribose 1-diphosphate + anthranilate. Its pathway is amino-acid biosynthesis; L-tryptophan biosynthesis; L-tryptophan from chorismate: step 2/5. Catalyzes the transfer of the phosphoribosyl group of 5-phosphorylribose-1-pyrophosphate (PRPP) to anthranilate to yield N-(5'-phosphoribosyl)-anthranilate (PRA). The polypeptide is Anthranilate phosphoribosyltransferase (Mycobacterium leprae (strain Br4923)).